The following is a 196-amino-acid chain: Imidazoleglycerol-phosphate dehydratase (196 aa).

It belongs to the imidazoleglycerol-phosphate dehydratase family.

The protein localises to the cytoplasm. The catalysed reaction is D-erythro-1-(imidazol-4-yl)glycerol 3-phosphate = 3-(imidazol-4-yl)-2-oxopropyl phosphate + H2O. The protein operates within amino-acid biosynthesis; L-histidine biosynthesis; L-histidine from 5-phospho-alpha-D-ribose 1-diphosphate: step 6/9. This is Imidazoleglycerol-phosphate dehydratase from Halobacterium salinarum (strain ATCC 700922 / JCM 11081 / NRC-1) (Halobacterium halobium).